The following is a 1134-amino-acid chain: Centrosomal protein of 131 kDa (1134 aa).

Disordered regions lie at residues 111–131 (NSSE…EEGE), 168–208 (DLPG…PLTL), 286–306 (ESSK…APSS), 425–455 (VGKK…TINP), and 492–528 (DQKQ…EDSR). Positions 180–196 (MHADLDSSDCDNDKQEV) are enriched in basic and acidic residues. The span at 494–504 (KQYDGKHKPGL) shows a compositional bias: basic and acidic residues. Polar residues predominate over residues 513–522 (NDTASQLSLK). Positions 732–1131 (LESQNQAWEH…AVIRQQRKDY (400 aa)) form a coiled coil.

The protein belongs to the CEP131 family. As to expression, expressed in chordotonal (Ch) neuronal precursors. Expressed in ciliated cells, like sensory neurons and spermatids.

The protein resides in the cytoplasm. It localises to the cytoskeleton. The protein localises to the microtubule organizing center. Its subcellular location is the centrosome. It is found in the cilium basal body. The protein resides in the centriole. In terms of biological role, cilium-specific protein with a role in cilium/flagellum formation. May be involved in transport of components into the growing cilium. In germ cells and sensory neurons, plays a role with Cby in the building of the transition zone necessary for the formation of the ciliary cap and for the correct elongation of the axoneme. In Drosophila melanogaster (Fruit fly), this protein is Centrosomal protein of 131 kDa.